Reading from the N-terminus, the 1305-residue chain is ABC transporter FPSE_09185 (1305 aa).

Asparagine 28 is a glycosylation site (N-linked (GlcNAc...) asparagine). 6 consecutive transmembrane segments (helical) span residues 44-64 (FCVY…MPLM), 99-119 (LYIV…KFCF), 172-192 (RLGT…VAFT), 199-219 (IVSA…VPIY), 277-297 (IIGA…GLAF), and 312-332 (VGVV…FSYL). The ABC transmembrane type-1 1 domain occupies 48–348 (VVGALASIGV…ISQAMVAATE (301 aa)). An ABC transporter 1 domain is found at 372 to 663 (LIFKDVTFEY…ENGVYYSLVE (292 aa)). Position 407-414 (407-414 (GPSGSGKS)) interacts with ATP. A disordered region spans residues 434–454 (EAATPRSSKEGERDNHDERKY). Positions 440 to 454 (SSKEGERDNHDERKY) are enriched in basic and acidic residues. N-linked (GlcNAc...) asparagine glycans are attached at residues asparagine 468, asparagine 507, and asparagine 525. The next 6 helical transmembrane spans lie at 737 to 757 (FLLI…QAWL), 780 to 800 (GFMW…QCWI), 851 to 873 (GVFG…CLII), 877 to 899 (FGWK…SGFW), 964 to 984 (AVIF…ILWY), and 999 to 1019 (FMVS…ILGV). The ABC transmembrane type-1 2 domain maps to 738–1025 (LLITIASMGV…ILGVAPSAAQ (288 aa)). The tract at residues 1038–1057 (DSNRSSQEAEKSGPTVEDTD) is disordered. Residues asparagine 1040, asparagine 1066, and asparagine 1075 are each glycosylated (N-linked (GlcNAc...) asparagine). Residues 1062–1300 (IELCNVSFKY…RGIYWDMCQT (239 aa)) enclose the ABC transporter 2 domain. 1096-1103 (GPSGCGKT) contributes to the ATP binding site. N-linked (GlcNAc...) asparagine glycosylation occurs at asparagine 1125.

Belongs to the ABC transporter superfamily. ABCB family. Multidrug resistance exporter (TC 3.A.1.201) subfamily.

The protein localises to the membrane. ABC transporter; part of the gene cluster that mediates the biosynthesis of the lipopeptides W493 A and B. W493 A and B consist of six amino acid residues D-allo-thr, L-Ala, D-Ala, L-Gln, D-Tyr, and L-Val/L-Ile linked to a 3-hydroxy-4-methyltetradecanoic acid polyketide chain. May be involved in excretion or internal transport of W493 A and B. In Fusarium pseudograminearum (strain CS3096) (Wheat and barley crown-rot fungus), this protein is ABC transporter FPSE_09185.